A 316-amino-acid polypeptide reads, in one-letter code: 4-hydroxy-3-methylbut-2-enyl diphosphate reductase (316 aa).

Cysteine 12 is a binding site for [4Fe-4S] cluster. Positions 41 and 74 each coordinate (2E)-4-hydroxy-3-methylbut-2-enyl diphosphate. Positions 41 and 74 each coordinate dimethylallyl diphosphate. The isopentenyl diphosphate site is built by histidine 41 and histidine 74. A [4Fe-4S] cluster-binding site is contributed by cysteine 96. Histidine 124 contacts (2E)-4-hydroxy-3-methylbut-2-enyl diphosphate. Histidine 124 is a binding site for dimethylallyl diphosphate. Histidine 124 serves as a coordination point for isopentenyl diphosphate. Residue glutamate 126 is the Proton donor of the active site. Position 167 (threonine 167) interacts with (2E)-4-hydroxy-3-methylbut-2-enyl diphosphate. A [4Fe-4S] cluster-binding site is contributed by cysteine 197. Residues serine 225, serine 226, asparagine 227, and serine 269 each coordinate (2E)-4-hydroxy-3-methylbut-2-enyl diphosphate. Serine 225, serine 226, asparagine 227, and serine 269 together coordinate dimethylallyl diphosphate. Isopentenyl diphosphate-binding residues include serine 225, serine 226, asparagine 227, and serine 269.

The protein belongs to the IspH family. Homodimer. Requires [4Fe-4S] cluster as cofactor.

It catalyses the reaction isopentenyl diphosphate + 2 oxidized [2Fe-2S]-[ferredoxin] + H2O = (2E)-4-hydroxy-3-methylbut-2-enyl diphosphate + 2 reduced [2Fe-2S]-[ferredoxin] + 2 H(+). The enzyme catalyses dimethylallyl diphosphate + 2 oxidized [2Fe-2S]-[ferredoxin] + H2O = (2E)-4-hydroxy-3-methylbut-2-enyl diphosphate + 2 reduced [2Fe-2S]-[ferredoxin] + 2 H(+). It participates in isoprenoid biosynthesis; dimethylallyl diphosphate biosynthesis; dimethylallyl diphosphate from (2E)-4-hydroxy-3-methylbutenyl diphosphate: step 1/1. Its pathway is isoprenoid biosynthesis; isopentenyl diphosphate biosynthesis via DXP pathway; isopentenyl diphosphate from 1-deoxy-D-xylulose 5-phosphate: step 6/6. Catalyzes the conversion of 1-hydroxy-2-methyl-2-(E)-butenyl 4-diphosphate (HMBPP) into a mixture of isopentenyl diphosphate (IPP) and dimethylallyl diphosphate (DMAPP). Acts in the terminal step of the DOXP/MEP pathway for isoprenoid precursor biosynthesis. This Salmonella agona (strain SL483) protein is 4-hydroxy-3-methylbut-2-enyl diphosphate reductase.